Here is a 439-residue protein sequence, read N- to C-terminus: Rho GTPase-activating protein 1 (439 aa).

An N-acetylmethionine modification is found at Met-1. The segment covering 28-48 (IDEKNWPSDEMPDFPKSDDSK) has biased composition (basic and acidic residues). Residues 28 to 55 (IDEKNWPSDEMPDFPKSDDSKSSSPEPV) form a disordered region. A phosphoserine mark is found at Ser-44, Ser-47, Ser-50, and Ser-51. The 156-residue stretch at 63-218 (PYYDIARHQI…QVLKYDDFLK (156 aa)) folds into the CRAL-TRIO domain. At Tyr-65 the chain carries Phosphotyrosine. Position 80 is an N6-acetyllysine (Lys-80). Residues 228-238 (PKPMPPRPPLP) carry the SH3-binding motif. Positions 244 to 431 (VSLQHLQEKS…FLLDHQGELF (188 aa)) constitute a Rho-GAP domain.

Found in a complex with XPO7, EIF4A1, ARHGAP1, VPS26A, VPS29, VPS35 and SFN. Interacts with BNIPL.

Its subcellular location is the cytoplasm. GTPase activator for the Rho, Rac and Cdc42 proteins, converting them to the putatively inactive GDP-bound state. Cdc42 seems to be the preferred substrate. This chain is Rho GTPase-activating protein 1 (Arhgap1), found in Mus musculus (Mouse).